The primary structure comprises 606 residues: Ubiquitin carboxyl-terminal hydrolase 2 (606 aa).

Residues 1–201 (MSQLSSTLKR…RSEYLADYLE (201 aa)) are necessary for interaction with MDM4. Disordered stretches follow at residues 53–112 (PSPP…GGSG) and 207–228 (ASAP…LSPT). Positions 90-100 (KRAESQTRGTE) are enriched in basic and acidic residues. Positions 268-600 (AGLRNLGNTC…DAYLLFYELA (333 aa)) constitute a USP domain. The active-site Nucleophile is cysteine 277. A necessary for interaction with MDM4 region spans residues 404 to 504 (YLEREDSRIG…FPKILVLHLK (101 aa)). Residues cysteine 426, cysteine 429, cysteine 477, and cysteine 480 each contribute to the Zn(2+) site. Histidine 558 functions as the Proton acceptor in the catalytic mechanism.

Belongs to the peptidase C19 family. USP2 subfamily. As to quaternary structure, homooligomer. Found in trimeric complex with MDM2 and MDM4 and USP2. Interacts with CCND1; the interaction is direct and promotes its stabilization by antagonizing ubiquitin-dependent degradation. Interacts (via N-terminus and C-terminus) with MDM2. Interacts with MDM4 and PER1. Interacts with KCNQ1; counteracts the NEDD4L-specific down-regulation of I(Ks) and restores plasma membrane localization of KCNQ1.

It localises to the cytoplasm. The protein localises to the perinuclear region. The catalysed reaction is Thiol-dependent hydrolysis of ester, thioester, amide, peptide and isopeptide bonds formed by the C-terminal Gly of ubiquitin (a 76-residue protein attached to proteins as an intracellular targeting signal).. Cleavage is inhibited by ubiquitin in a dosage-dependent manner. Cleavage is blocked by ubiquitin aldehyde. Hydrolase that deubiquitinates polyubiquitinated target proteins such as MDM2, MDM4 and CCND1. Possesses both ubiquitin-specific peptidase and isopeptidase activities. Deubiquitinates MDM2 without reversing MDM2-mediated p53/TP53 ubiquitination and thus indirectly promotes p53/TP53 degradation and limits p53 activity. Has no deubiquitinase activity against p53/TP53. Prevents MDM2-mediated degradation of MDM4. Plays a role in the G1/S cell-cycle progression in normal and cancer cells. Plays a role in the regulation of myogenic differentiation of embryonic muscle cells. Regulates the circadian clock by modulating its intrinsic circadian rhythm and its capacity to respond to external cues. Associates with clock proteins and deubiquitinates core clock component PER1 but does not affect its overall stability. Regulates the nucleocytoplasmic shuttling and nuclear retention of PER1 and its repressive role on the clock transcription factors CLOCK and BMAL1. The sequence is that of Ubiquitin carboxyl-terminal hydrolase 2 (USP2) from Bos taurus (Bovine).